A 303-amino-acid chain; its full sequence is UDP-3-O-acyl-N-acetylglucosamine deacetylase (303 aa).

Zn(2+) is bound by residues His79, His238, and Asp242. The active-site Proton donor is His265.

Belongs to the LpxC family. Requires Zn(2+) as cofactor.

The enzyme catalyses a UDP-3-O-[(3R)-3-hydroxyacyl]-N-acetyl-alpha-D-glucosamine + H2O = a UDP-3-O-[(3R)-3-hydroxyacyl]-alpha-D-glucosamine + acetate. Its pathway is glycolipid biosynthesis; lipid IV(A) biosynthesis; lipid IV(A) from (3R)-3-hydroxytetradecanoyl-[acyl-carrier-protein] and UDP-N-acetyl-alpha-D-glucosamine: step 2/6. Catalyzes the hydrolysis of UDP-3-O-myristoyl-N-acetylglucosamine to form UDP-3-O-myristoylglucosamine and acetate, the committed step in lipid A biosynthesis. The sequence is that of UDP-3-O-acyl-N-acetylglucosamine deacetylase from Pseudoalteromonas translucida (strain TAC 125).